Reading from the N-terminus, the 348-residue chain is Sulfate/thiosulfate import ATP-binding protein CysA (348 aa).

The ABC transporter domain occupies 3–237 (IEIRNITKSF…PATPFVCQFI (235 aa)). 35-42 (GPSGCGKT) serves as a coordination point for ATP.

This sequence belongs to the ABC transporter superfamily. Sulfate/tungstate importer (TC 3.A.1.6) family. As to quaternary structure, the complex is composed of two ATP-binding proteins (CysA), two transmembrane proteins (CysT and CysW) and a solute-binding protein (CysP).

The protein resides in the cell inner membrane. The enzyme catalyses sulfate(out) + ATP + H2O = sulfate(in) + ADP + phosphate + H(+). The catalysed reaction is thiosulfate(out) + ATP + H2O = thiosulfate(in) + ADP + phosphate + H(+). Its function is as follows. Part of the ABC transporter complex CysAWTP involved in sulfate/thiosulfate import. Responsible for energy coupling to the transport system. The chain is Sulfate/thiosulfate import ATP-binding protein CysA from Methylococcus capsulatus (strain ATCC 33009 / NCIMB 11132 / Bath).